Here is a 207-residue protein sequence, read N- to C-terminus: Large ribosomal subunit protein uL4 (207 aa).

The interval 50–75 (KTKTRSEVAGSGKKPFKQKGTGNARQ) is disordered.

Belongs to the universal ribosomal protein uL4 family. As to quaternary structure, part of the 50S ribosomal subunit.

One of the primary rRNA binding proteins, this protein initially binds near the 5'-end of the 23S rRNA. It is important during the early stages of 50S assembly. It makes multiple contacts with different domains of the 23S rRNA in the assembled 50S subunit and ribosome. In terms of biological role, forms part of the polypeptide exit tunnel. In Pelobacter propionicus (strain DSM 2379 / NBRC 103807 / OttBd1), this protein is Large ribosomal subunit protein uL4.